A 201-amino-acid polypeptide reads, in one-letter code: Syndecan-2 (201 aa).

Positions 1–18 (MQRAWILLTLGLMACVSA) are cleaved as a signal peptide. The Extracellular portion of the chain corresponds to 19 to 144 (ETRAELTSDK…HSDNLFKRTE (126 aa)). Residues serine 41, serine 55, and serine 57 are each glycosylated (O-linked (Xyl...) (glycosaminoglycan) serine). Disordered stretches follow at residues 42 to 69 (GLYPIDDDDYSSASGSGAYEDKGSPDLT) and 88 to 129 (TMTL…KSTD). Residues 90 to 102 (TLKTQSITPTQTE) show a composition bias toward polar residues. Basic and acidic residues predominate over residues 106 to 123 (ETDKKEFEISEAEEKQDP). Serine 115 is modified (phosphoserine). Residues 145 to 169 (VLAAVIAGGVIGFLFAIFLILLLVY) traverse the membrane as a helical segment. Residues 170–201 (RMRKKDEGSYDLGERKPSSAAYQKAPTKEFYA) lie on the Cytoplasmic side of the membrane. Positions 178 to 201 (SYDLGERKPSSAAYQKAPTKEFYA) are disordered. Serine 187 carries the post-translational modification Phosphoserine.

It belongs to the syndecan proteoglycan family. Interacts (via cytoplasmic domain) with SARM1. Forms a complex with SDCBP and PDCD6IP. O-glycosylated; contains both heparan sulfate and chondroitin sulfate.

It localises to the membrane. Its function is as follows. Cell surface proteoglycan which regulates dendritic arbor morphogenesis. This is Syndecan-2 (Sdc2) from Rattus norvegicus (Rat).